The following is a 307-amino-acid chain: 4-hydroxybenzoate geranyltransferase 1 (307 aa).

Transmembrane regions (helical) follow at residues 38-58 (PIGS…AADL), 62-82 (PKML…GCTI), 120-140 (LFIG…LAIV), 154-174 (ITYW…LLGS), 179-199 (GSVV…WTLV), 230-250 (MWIS…GLIL), 252-272 (IGLP…WQIF), and 286-306 (FVSN…GRLF).

This sequence belongs to the UbiA prenyltransferase family. Mg(2+) is required as a cofactor. In terms of tissue distribution, expressed only in roots.

The protein localises to the endoplasmic reticulum membrane. The enzyme catalyses 4-hydroxybenzoate + (2E)-geranyl diphosphate = 3-geranyl-4-hydroxybenzoate + diphosphate. Functionally, prenyltransferase involved in the biosynthesis of shikonin, a naphthoquinone secondary metabolite. Could accept only geranyl diphosphate and not dimethylallyl diphosphate, farnesyl diphosphate, or geranylgeranyl diphosphate as substrate. This Lithospermum erythrorhizon (Purple gromwell) protein is 4-hydroxybenzoate geranyltransferase 1 (PGT-1).